The sequence spans 464 residues: MDRLVKTEFNEVNLNFQKNQKCSSSFKLTNLMHTMSVAVSLTTTNPTTFSINKPLSVIPPLSSSTYTLHLTNLNQPPLSEPADVITVRTSMLPTGKATTDDLRRLFNKPGPHVFRDAVITVILVGPTVAEYVISNYETRNLFTKAISVCTKSNLTNLMKPAVESGKVEYVTDLITAGGDVNFRDSNGKSLIPFAIRTGKLAVLKLLVANGCRINDSVDFVLHEAAIIDRVDVVKFLFESFCDELDVNSVNREMMTPIHVSASEGHVSLIEFFVSIGGNANAVDSRRWTPLHHAASRNHLKAVEFLLENSDVKYARELNGKTAFEIASESGHTRLFGVLRWGDALLQAARVDDVHALKKCLGEGAEVNRKDQNGWTPLHWASFKGRIKSVKVLLEHGAEVDSVDDAGYTPLHCAAEAGHLQVALVLIAHGGCQTNLKSFQHVSPIATFQKHVSLHYSTKKSETFA.

Positions 3–124 (RLVKTEFNEV…RDAVITVILV (122 aa)) constitute an MSP domain. ANK repeat units follow at residues 153–182 (NLTNLMKPAVESGKVEYVTDLITAGGDVNF), 186–215 (NGKSLIPFAIRTGKLAVLKLLVANGCRIND), 217–246 (VDFVLHEAAIIDRVDVVKFLFESFCDELDV), 252–281 (EMMTPIHVSASEGHVSLIEFFVSIGGNANA), 285–314 (RRWTPLHHAASRNHLKAVEFLLENSDVKYA), 318–347 (NGKTAFEIASESGHTRLFGVLRWGDALLQA), 349–368 (RVDDVHALKKCLGEGAEVNR), 372–401 (NGWTPLHWASFKGRIKSVKVLLEHGAEVDS), and 405–435 (AGYTPLHCAAEAGHLQVALVLIAHGGCQTNL).

As to expression, expressed in roots.

It is found in the cytoplasm. It localises to the nucleus. The protein localises to the cell membrane. Its function is as follows. May be involved in arbuscular mycorrhizal (AM) symbiosis with AM fungi and in nitrogen-fixing rhizobial bacteria symbiosis leading to the formation of root nodules. The chain is Protein VAPYRIN-LIKE from Medicago truncatula (Barrel medic).